A 699-amino-acid chain; its full sequence is Elongation factor G (699 aa).

The region spanning 8–288 (EDYRNFGIMA…AVVDYLPSPL (281 aa)) is the tr-type G domain. GTP-binding positions include 17 to 24 (AHIDAGKT), 86 to 90 (DTPGH), and 140 to 143 (NKMD).

The protein belongs to the TRAFAC class translation factor GTPase superfamily. Classic translation factor GTPase family. EF-G/EF-2 subfamily.

The protein localises to the cytoplasm. Functionally, catalyzes the GTP-dependent ribosomal translocation step during translation elongation. During this step, the ribosome changes from the pre-translocational (PRE) to the post-translocational (POST) state as the newly formed A-site-bound peptidyl-tRNA and P-site-bound deacylated tRNA move to the P and E sites, respectively. Catalyzes the coordinated movement of the two tRNA molecules, the mRNA and conformational changes in the ribosome. The protein is Elongation factor G of Rhizobium etli (strain ATCC 51251 / DSM 11541 / JCM 21823 / NBRC 15573 / CFN 42).